The following is a 193-amino-acid chain: MARNANITRETKETKIEVFLDIDRKGEIKISTPVPFFNHMLITLLTYMNSTATVSATDKLPYDDHHIIEDVAITLGLAIKEALGDKRGIKRFSHQIIPMDEALVLVSLDISNRGMAFVSLNLRRSEIGGLATENIPHFFQSFAYNSGVTLHISQLSGYNTHHIIEASFKALGLALYEATRIVDNEIRSTKGVI.

Belongs to the imidazoleglycerol-phosphate dehydratase family.

The protein resides in the cytoplasm. The catalysed reaction is D-erythro-1-(imidazol-4-yl)glycerol 3-phosphate = 3-(imidazol-4-yl)-2-oxopropyl phosphate + H2O. It participates in amino-acid biosynthesis; L-histidine biosynthesis; L-histidine from 5-phospho-alpha-D-ribose 1-diphosphate: step 6/9. This chain is Imidazoleglycerol-phosphate dehydratase, found in Saccharolobus islandicus (strain Y.G.57.14 / Yellowstone #1) (Sulfolobus islandicus).